A 371-amino-acid polypeptide reads, in one-letter code: Ecto-ADP-ribosyltransferase 3 (371 aa).

A signal peptide spans 1–26; sequence MKMGHFEMVTTLLAAAVLMDIFQVKA. An intrachain disulfide couples C43 to C255. The region spanning 64-250 is the TR mART core domain; the sequence is ALLRMVWDNA…LVLQSINSTC (187 aa). The NAD(+) site is built by Y101 and N182. A disordered region spans residues 306–346; sequence VLQTEENPLLPDEKPDRSRGKANNPTPGLVPGPKSHPSASS. A lipid anchor (GPI-anchor amidated serine) is attached at S345. The propeptide at 346–371 is removed in mature form; that stretch reads SGNTLLPSVMASTILLVASAVNFIEL.

Belongs to the Arg-specific ADP-ribosyltransferase family.

It is found in the cell membrane. The enzyme catalyses L-arginyl-[protein] + NAD(+) = N(omega)-(ADP-D-ribosyl)-L-arginyl-[protein] + nicotinamide + H(+). The polypeptide is Ecto-ADP-ribosyltransferase 3 (Art3) (Mus musculus (Mouse)).